A 361-amino-acid chain; its full sequence is Deoxyribonuclease-2-beta (361 aa).

An N-terminal signal peptide occupies residues 1-27 (MKQKMMARLLRTSFALLFLGLFGVLGA). Residues Asn-81, Asn-103, Asn-119, and Asn-278 are each glycosylated (N-linked (GlcNAc...) asparagine).

The protein belongs to the DNase II family. As to expression, highly expressed in the eye lens and in salivary gland. Detected at lower levels in lung, prostate and lymph node. Isoform 2 is lung specific.

The protein resides in the lysosome. It catalyses the reaction Endonucleolytic cleavage to nucleoside 3'-phosphates and 3'-phosphooligonucleotide end-products.. Its function is as follows. Hydrolyzes DNA under acidic conditions. Does not require divalent cations for activity. Participates in the degradation of nuclear DNA during lens cell differentiation. The polypeptide is Deoxyribonuclease-2-beta (DNASE2B) (Homo sapiens (Human)).